The chain runs to 35 residues: Photosystem II reaction center protein T (35 aa).

Residues 3-23 traverse the membrane as a helical segment; sequence ALVYTFLLVSTLGIIFFAIFF.

This sequence belongs to the PsbT family. In terms of assembly, PSII is composed of 1 copy each of membrane proteins PsbA, PsbB, PsbC, PsbD, PsbE, PsbF, PsbH, PsbI, PsbJ, PsbK, PsbL, PsbM, PsbT, PsbY, PsbZ, Psb30/Ycf12, at least 3 peripheral proteins of the oxygen-evolving complex and a large number of cofactors. It forms dimeric complexes.

The protein resides in the plastid. Its subcellular location is the chloroplast thylakoid membrane. Its function is as follows. Found at the monomer-monomer interface of the photosystem II (PS II) dimer, plays a role in assembly and dimerization of PSII. PSII is a light-driven water plastoquinone oxidoreductase, using light energy to abstract electrons from H(2)O, generating a proton gradient subsequently used for ATP formation. The protein is Photosystem II reaction center protein T of Drimys granadensis.